The following is a 494-amino-acid chain: Cytochrome P450 monooxygenase acrF (494 aa).

C420 provides a ligand contact to heme.

Belongs to the cytochrome P450 family. Requires heme as cofactor.

The protein operates within secondary metabolite biosynthesis. Its function is as follows. Cytochrome P450 monooxygenase; part of the cluster that mediates the biosynthesis of acurin A, a highly reduced polyketide coupled to a serine via a peptide bond. The activities of the highly reducing polyketide synthase acrA and the nonribosomal peptide synthetase acrB are collectively responsible for the synthesis of the acurin A core structure with a heptaketide backbone produced by acrA covalently fused to a L-serine by acrB. After the formation of the PK-NRP hybrid product, it is detached from acrB by reductive release to set up the formation of the lactam ring by aldol condensation. The hydrolyase acrC then catalyzes water loss to generate a double bond in the ring. This double bond is probably reduced, which is followed by three oxidations at C-22 to generate the carboxylic acid moiety, involving probably the FAD-binding monooxygenase acrE and the cytochrome P450 monooxygenases acrD and acrF. Finally, a last methylation step performed by the O-methyltransferase acrG leads to the production of acurin A. The protein is Cytochrome P450 monooxygenase acrF of Aspergillus aculeatus (strain ATCC 16872 / CBS 172.66 / WB 5094).